The primary structure comprises 264 residues: Protein OXIDATIVE STRESS 3 LIKE 1 (264 aa).

2 disordered regions span residues 1–76 and 178–225; these read MDCV…GPLE and TGEG…QGSF. Over residues 29 to 43 the composition is skewed to low complexity; it reads PSDSSSSPSSSASSS. The segment covering 47–56 has biased composition (basic and acidic residues); sequence NSDDGEKSSE. A compositionally biased stretch (acidic residues) spans 57–67; it reads DGGDDAGENEV. Positions 179-201 are enriched in low complexity; sequence GEGSSSGGDSSPGSSPTTSGSPP. Residues 203 to 212 are compositionally biased toward basic residues; that stretch reads QLHHHQHQMK.

Its subcellular location is the nucleus. Promotes slightly the tolerance to zinc (Zn) and to oxidizing chemicals (e.g. diamide). This chain is Protein OXIDATIVE STRESS 3 LIKE 1, found in Arabidopsis thaliana (Mouse-ear cress).